Here is a 594-residue protein sequence, read N- to C-terminus: Beta-fructofuranosidase, insoluble isoenzyme CWINV3 (594 aa).

A signal peptide spans methionine 1–alanine 28. Residues tryptophan 50–aspartate 53, glutamine 69, tryptophan 77, and tryptophan 113–serine 114 each bind substrate. Aspartate 53 is a catalytic residue. The N-linked (GlcNAc...) asparagine glycan is linked to asparagine 147. Residue arginine 179–aspartate 180 participates in substrate binding. An N-linked (GlcNAc...) asparagine glycan is attached at asparagine 217. Glutamate 235 contributes to the substrate binding site. N-linked (GlcNAc...) asparagine glycans are attached at residues asparagine 297 and asparagine 329. A disulfide bridge connects residues cysteine 428 and cysteine 480.

The protein belongs to the glycosyl hydrolase 32 family. In terms of tissue distribution, expressed in seedlings, leaves, flowers, and seeds.

It localises to the secreted. The protein localises to the extracellular space. Its subcellular location is the apoplast. The protein resides in the cell wall. The catalysed reaction is Hydrolysis of terminal, non-reducing (2-&gt;1)- and (2-&gt;6)-linked beta-D-fructofuranose residues in fructans.. 6-fructan exohydrolase that can use phlein, levan, neokestose, levanbiose, 6-kestose, and 1-kestose as substrates. In Arabidopsis thaliana (Mouse-ear cress), this protein is Beta-fructofuranosidase, insoluble isoenzyme CWINV3 (CWINV3).